The chain runs to 564 residues: MFS-type efflux pump LUC4 (564 aa).

The segment covering 1 to 15 (MGQSQDNTQLTTASP) has biased composition (polar residues). Residues 1–35 (MGQSQDNTQLTTASPQAEKDLSSNDNPPESEPAAP) are disordered. The next 5 helical transmembrane spans lie at 42 to 62 (WLVFIAIALTTFLAALDTSII), 78 to 98 (LYVWIVDSYLLASTATIPIFA), 108 to 128 (SLTLIAVCLFTLGSGLCGGAH), 141 to 161 (GVGGGGILTMSEIVVCDMVSV), and 170 to 190 (IIGGVWAIASVIAPIMGGAFA). Asparagine 192 is a glycosylation site (N-linked (GlcNAc...) asparagine). A run of 3 helical transmembrane segments spans residues 197 to 217 (WIFYINLPIAGVVLVALIVFL), 236 to 256 (WGGSVLLIASVTAVVLALSWG), and 268 to 288 (LVPLILGLVGQLAFFAYQGAP). N-linked (GlcNAc...) asparagine glycosylation occurs at asparagine 302. Transmembrane regions (helical) follow at residues 308-328 (LFVISFVHSMLLFWVCYFLPV), 343-363 (VMLFPIATTSAPGGVIAGIFI), 371-391 (VWHFVGFALMSISCGLFTLLD), 404-424 (LLFGFGTGFVFTSCLPPILAS), and 436-456 (AWTFLRNFGSIWGIAIPAAAF). Residue asparagine 461 is glycosylated (N-linked (GlcNAc...) asparagine). Residues 512–532 (KLVWQVSIAFSVLGFVLAFLV) form a helical membrane-spanning segment.

The protein belongs to the major facilitator superfamily. TCR/Tet family.

It is found in the membrane. MFS-type efflux pump; part of the gene cluster that mediates the biosynthesis of the mycotoxin lucilactaene and the lucilactaene-related compound NG-391 that act as cell cycle inhibitors with potent growth inhibitory activity against malarial parasites, moderate growth inhibitory activity against cancer cells, and no activity against bacteria and fungi. This Fusarium sp protein is MFS-type efflux pump LUC4.